The following is a 377-amino-acid chain: Stimulator of interferon genes protein 7 (377 aa).

4 helical membrane passes run 30-50 (TAAI…FLAV), 57-77 (THFL…GELL), 106-126 (FTFD…LILC), and 141-161 (FAIL…LVGL).

The protein belongs to the STING family.

It is found in the membrane. Facilitator of innate immune signaling that acts as a sensor of second messenger signals produced by cyclic GMP-AMP synthase-like receptors (cGLRs) and promotes the production of type I interferon. Innate immune response is triggered in response to nucleotides from viruses and bacteria delivered to the cytoplasm. Acts by binding cyclic dinucleotides: recognizes and binds a large variety of 2'-3'- and 3'-3' linked cyclic dinucleotides (2'-3'-cGAMP, 3'-3'-cGAMP, 2',3'-cUAMP, 3',3'-cUAMP and/or 3',3'-c-di-GMP) second messengers produced by cGLRs in response to nucleotides in the cytosol, such as double-stranded RNA (dsRNA). Upon binding to cyclic dinucleotides, oligomerizes and promotes the recruitment and subsequent activation of the transcription factor IRF3 to induce expression of type I interferon. The polypeptide is Stimulator of interferon genes protein 7 (Stylophora pistillata (Smooth cauliflower coral)).